Reading from the N-terminus, the 365-residue chain is Carbamoyl phosphate synthase small chain (365 aa).

CPSase stretches follow at residues 1–166 (MKRQ…PSPG) and 1–169 (MKRQ…GRGH). L-glutamine-binding residues include Ser45, Gly218, and Gly220. One can recognise a Glutamine amidotransferase type-1 domain in the interval 170–357 (RVVLVDFGMK…LTMIENFKKE (188 aa)). The active-site Nucleophile is Cys245. L-glutamine contacts are provided by Leu246, Gln249, Asn287, Gly289, and Tyr290. Active-site residues include His330 and Glu332.

It belongs to the CarA family. Composed of two chains; the small (or glutamine) chain promotes the hydrolysis of glutamine to ammonia, which is used by the large (or ammonia) chain to synthesize carbamoyl phosphate. Tetramer of heterodimers (alpha,beta)4.

The enzyme catalyses hydrogencarbonate + L-glutamine + 2 ATP + H2O = carbamoyl phosphate + L-glutamate + 2 ADP + phosphate + 2 H(+). It catalyses the reaction L-glutamine + H2O = L-glutamate + NH4(+). It participates in amino-acid biosynthesis; L-arginine biosynthesis; carbamoyl phosphate from bicarbonate: step 1/1. Its pathway is pyrimidine metabolism; UMP biosynthesis via de novo pathway; (S)-dihydroorotate from bicarbonate: step 1/3. Its function is as follows. Small subunit of the glutamine-dependent carbamoyl phosphate synthetase (CPSase). CPSase catalyzes the formation of carbamoyl phosphate from the ammonia moiety of glutamine, carbonate, and phosphate donated by ATP, constituting the first step of 2 biosynthetic pathways, one leading to arginine and/or urea and the other to pyrimidine nucleotides. The small subunit (glutamine amidotransferase) binds and cleaves glutamine to supply the large subunit with the substrate ammonia. The protein is Carbamoyl phosphate synthase small chain of Bacillus anthracis.